We begin with the raw amino-acid sequence, 129 residues long: Holo-[acyl-carrier-protein] synthase (129 aa).

Mg(2+) contacts are provided by Asp-8 and Glu-58.

Belongs to the P-Pant transferase superfamily. AcpS family. Mg(2+) is required as a cofactor.

It is found in the cytoplasm. It carries out the reaction apo-[ACP] + CoA = holo-[ACP] + adenosine 3',5'-bisphosphate + H(+). Transfers the 4'-phosphopantetheine moiety from coenzyme A to a Ser of acyl-carrier-protein. The protein is Holo-[acyl-carrier-protein] synthase of Acidithiobacillus ferrooxidans (strain ATCC 53993 / BNL-5-31) (Leptospirillum ferrooxidans (ATCC 53993)).